A 396-amino-acid chain; its full sequence is Elongation factor Tu 1 (396 aa).

The 197-residue stretch at 10–206 (KPHVNIGTIG…AVDEYIPTPE (197 aa)) folds into the tr-type G domain. The G1 stretch occupies residues 19–26 (GHVDHGKT). 19–26 (GHVDHGKT) is a binding site for GTP. Thr26 is a binding site for Mg(2+). Residues 60–64 (GITIN) are G2. The tract at residues 81–84 (DCPG) is G3. Residues 81 to 85 (DCPGH) and 136 to 139 (NKVD) contribute to the GTP site. Residues 136–139 (NKVD) are G4. The tract at residues 174 to 176 (SAL) is G5.

Belongs to the TRAFAC class translation factor GTPase superfamily. Classic translation factor GTPase family. EF-Tu/EF-1A subfamily. Monomer.

Its subcellular location is the cytoplasm. The catalysed reaction is GTP + H2O = GDP + phosphate + H(+). Functionally, GTP hydrolase that promotes the GTP-dependent binding of aminoacyl-tRNA to the A-site of ribosomes during protein biosynthesis. The protein is Elongation factor Tu 1 of Hyphomonas neptunium (strain ATCC 15444).